We begin with the raw amino-acid sequence, 647 residues long: Glutamyl-tRNA(Gln) amidotransferase subunit B, mitochondrial (647 aa).

Residues 1–16 (MARNLCRNVQTTPRPL) constitute a mitochondrion transit peptide. Positions 39-77 (PRPRYFGSSTAKSAKKKSNNKAYSGSSMSAGDASAGPSR) are disordered. The segment covering 58–76 (NKAYSGSSMSAGDASAGPS) has biased composition (low complexity).

It belongs to the GatB/GatE family. GatB subfamily. Subunit of the heterotrimeric GatCAB amidotransferase (AdT) complex, composed of A, B and C subunits.

The protein resides in the mitochondrion. It catalyses the reaction L-glutamyl-tRNA(Gln) + L-glutamine + ATP + H2O = L-glutaminyl-tRNA(Gln) + L-glutamate + ADP + phosphate + H(+). Functionally, allows the formation of correctly charged Gln-tRNA(Gln) through the transamidation of misacylated Glu-tRNA(Gln) in the mitochondria. The reaction takes place in the presence of glutamine and ATP through an activated gamma-phospho-Glu-tRNA(Gln). The sequence is that of Glutamyl-tRNA(Gln) amidotransferase subunit B, mitochondrial from Mycosarcoma maydis (Corn smut fungus).